Reading from the N-terminus, the 631-residue chain is Probable basic-leucine zipper transcription factor F (631 aa).

A coiled-coil region spans residues 35–62; that stretch reads KKNANVFNNFQQQQQQIQQQNKQSNGLI. Disordered stretches follow at residues 46 to 117, 154 to 207, and 264 to 406; these read QQQQ…HNNI, LNNS…NNQF, and MLNV…ERHQ. 2 stretches are compositionally biased toward low complexity: residues 155-206 and 271-360; these read NNSY…NNNQ and NNAN…GSNN. Positions 328–366 form a coiled coil; the sequence is NNNNNNSNNISTQINNLNNNINNQNNQLNGSNNGKKKEE. The bZIP domain maps to 405–468; sequence HQKRQRRLVK…KLIREQLLYL (64 aa). The basic motif stretch occupies residues 407 to 427; the sequence is KRQRRLVKNREAAQLFRQRQK. The leucine-zipper stretch occupies residues 433–440; it reads LEKKVSDL. Positions 546-631 are disordered; it reads QGNLLGTPIP…PPQQSTPNQR (86 aa). Composition is skewed to low complexity over residues 563 to 609 and 618 to 631; these read SNSG…PNSS and PQNT…PNQR.

Belongs to the bZIP family.

Its subcellular location is the nucleus. Functionally, probable transcriptional regulator. The polypeptide is Probable basic-leucine zipper transcription factor F (bzpF) (Dictyostelium discoideum (Social amoeba)).